We begin with the raw amino-acid sequence, 545 residues long: CTP synthase (545 aa).

Residues 1–266 (MTTNYIFVTG…DDYICKRFSL (266 aa)) are amidoligase domain. Ser-14 contributes to the CTP binding site. A UTP-binding site is contributed by Ser-14. ATP is bound by residues 15 to 20 (SLGKGI) and Asp-72. Positions 72 and 140 each coordinate Mg(2+). CTP is bound by residues 147–149 (DIE), 187–192 (KTKPTQ), and Lys-223. UTP-binding positions include 187 to 192 (KTKPTQ) and Lys-223. Position 239 to 241 (239 to 241 (KDV)) interacts with ATP. Residues 291 to 542 (TIGMVGKYIE…VKAANEHQKR (252 aa)) enclose the Glutamine amidotransferase type-1 domain. Gly-352 lines the L-glutamine pocket. Residue Cys-379 is the Nucleophile; for glutamine hydrolysis of the active site. Residues 380-383 (LGMQ), Glu-403, and Arg-470 each bind L-glutamine. Residues His-515 and Glu-517 contribute to the active site.

This sequence belongs to the CTP synthase family. In terms of assembly, homotetramer.

It carries out the reaction UTP + L-glutamine + ATP + H2O = CTP + L-glutamate + ADP + phosphate + 2 H(+). It catalyses the reaction L-glutamine + H2O = L-glutamate + NH4(+). The catalysed reaction is UTP + NH4(+) + ATP = CTP + ADP + phosphate + 2 H(+). It functions in the pathway pyrimidine metabolism; CTP biosynthesis via de novo pathway; CTP from UDP: step 2/2. With respect to regulation, allosterically activated by GTP, when glutamine is the substrate; GTP has no effect on the reaction when ammonia is the substrate. The allosteric effector GTP functions by stabilizing the protein conformation that binds the tetrahedral intermediate(s) formed during glutamine hydrolysis. Inhibited by the product CTP, via allosteric rather than competitive inhibition. Its function is as follows. Catalyzes the ATP-dependent amination of UTP to CTP with either L-glutamine or ammonia as the source of nitrogen. Regulates intracellular CTP levels through interactions with the four ribonucleotide triphosphates. The chain is CTP synthase from Salmonella paratyphi A (strain ATCC 9150 / SARB42).